Consider the following 238-residue polypeptide: Flagellar L-ring protein (238 aa).

Positions 1 to 16 (MNKAILAVAMVLLLAG) are cleaved as a signal peptide. A lipid anchor (N-palmitoyl cysteine) is attached at cysteine 17. Cysteine 17 is lipidated: S-diacylglycerol cysteine.

It belongs to the FlgH family. In terms of assembly, the basal body constitutes a major portion of the flagellar organelle and consists of four rings (L,P,S, and M) mounted on a central rod.

The protein resides in the cell outer membrane. Its subcellular location is the bacterial flagellum basal body. In terms of biological role, assembles around the rod to form the L-ring and probably protects the motor/basal body from shearing forces during rotation. The polypeptide is Flagellar L-ring protein (Brucella canis (strain ATCC 23365 / NCTC 10854 / RM-666)).